The sequence spans 300 residues: D-alanine--D-alanine ligase (300 aa).

The ATP-grasp domain occupies 99-293 (KKILKYANIN…FAELLNSIVK (195 aa)). 126 to 181 (IEKIGYPVFVKPNSGGSSVATNLVKDKEGIKEAVELALKYDKEVMIENYTKGEEIT) is an ATP binding site. Mg(2+)-binding residues include aspartate 248, glutamate 260, and asparagine 262.

Belongs to the D-alanine--D-alanine ligase family. The cofactor is Mg(2+). It depends on Mn(2+) as a cofactor.

It is found in the cytoplasm. It carries out the reaction 2 D-alanine + ATP = D-alanyl-D-alanine + ADP + phosphate + H(+). It functions in the pathway cell wall biogenesis; peptidoglycan biosynthesis. Functionally, cell wall formation. This is D-alanine--D-alanine ligase from Clostridium botulinum (strain ATCC 19397 / Type A).